Reading from the N-terminus, the 141-residue chain is MAKKLVAVVKLQLPAGKATPAPPVGPALGQYGINIMAFVKEYNEKSASQAGSIVPVEISIYSDRSFVARLLTPPAADLLRKAAGVQKGSSNPKRNPVGTITRAQLRQIAQQKLPDMNANDIEAAERIIAGTARSMGIKIVD.

It belongs to the universal ribosomal protein uL11 family. Part of the ribosomal stalk of the 50S ribosomal subunit. Interacts with L10 and the large rRNA to form the base of the stalk. L10 forms an elongated spine to which L12 dimers bind in a sequential fashion forming a multimeric L10(L12)X complex. Post-translationally, one or more lysine residues are methylated.

Its function is as follows. Forms part of the ribosomal stalk which helps the ribosome interact with GTP-bound translation factors. The polypeptide is Large ribosomal subunit protein uL11 (Chloroflexus aggregans (strain MD-66 / DSM 9485)).